The primary structure comprises 768 residues: Calcium up-regulated protein G (768 aa).

Residues 1 to 22 (MINIEDISKSSNQSEEKQLKST) form a disordered region. Ricin B-type lectin domains lie at 1-107 (MINI…WTID) and 100-248 (KTQI…WGIN).

The protein belongs to the cup family.

It localises to the cytoplasm. The protein resides in the membrane. In terms of biological role, may play an important role in stabilizing and/or regulating the cell membrane during Ca(2+) stress or certain stages of development. In Dictyostelium discoideum (Social amoeba), this protein is Calcium up-regulated protein G (cupG).